A 556-amino-acid polypeptide reads, in one-letter code: Formate--tetrahydrofolate ligase (556 aa).

65-72 (TPAGEGKS) contacts ATP.

It belongs to the formate--tetrahydrofolate ligase family.

The enzyme catalyses (6S)-5,6,7,8-tetrahydrofolate + formate + ATP = (6R)-10-formyltetrahydrofolate + ADP + phosphate. It functions in the pathway one-carbon metabolism; tetrahydrofolate interconversion. This Streptococcus pneumoniae serotype 4 (strain ATCC BAA-334 / TIGR4) protein is Formate--tetrahydrofolate ligase.